Consider the following 84-residue polypeptide: MERTLRKKRTGRVVSDKMDKTVVVAVETKVRHPLYGKTINKTTKFKVHDEKNEAKINDRVLIMETRPLSKDKRWRLVEIVEKAK.

This sequence belongs to the universal ribosomal protein uS17 family. In terms of assembly, part of the 30S ribosomal subunit.

In terms of biological role, one of the primary rRNA binding proteins, it binds specifically to the 5'-end of 16S ribosomal RNA. The sequence is that of Small ribosomal subunit protein uS17 from Clostridium botulinum (strain Alaska E43 / Type E3).